The primary structure comprises 334 residues: tRNA dimethylallyltransferase (334 aa).

Gly22 to Thr29 serves as a coordination point for ATP. Thr24–Thr29 provides a ligand contact to substrate.

This sequence belongs to the IPP transferase family. In terms of assembly, monomer. Mg(2+) is required as a cofactor.

The enzyme catalyses adenosine(37) in tRNA + dimethylallyl diphosphate = N(6)-dimethylallyladenosine(37) in tRNA + diphosphate. Functionally, catalyzes the transfer of a dimethylallyl group onto the adenine at position 37 in tRNAs that read codons beginning with uridine, leading to the formation of N6-(dimethylallyl)adenosine (i(6)A). The sequence is that of tRNA dimethylallyltransferase from Rhodopirellula baltica (strain DSM 10527 / NCIMB 13988 / SH1).